Here is a 249-residue protein sequence, read N- to C-terminus: 2,3-bisphosphoglycerate-dependent phosphoglycerate mutase (249 aa).

Substrate-binding positions include 7-14, 20-21, Arg-59, 86-89, Lys-97, 113-114, and 182-183; these read RHGESEWN, TG, ERHY, RR, and GN. The Tele-phosphohistidine intermediate role is filled by His-8. Glu-86 functions as the Proton donor/acceptor in the catalytic mechanism.

This sequence belongs to the phosphoglycerate mutase family. BPG-dependent PGAM subfamily.

It carries out the reaction (2R)-2-phosphoglycerate = (2R)-3-phosphoglycerate. Its pathway is carbohydrate degradation; glycolysis; pyruvate from D-glyceraldehyde 3-phosphate: step 3/5. Its function is as follows. Catalyzes the interconversion of 2-phosphoglycerate and 3-phosphoglycerate. The protein is 2,3-bisphosphoglycerate-dependent phosphoglycerate mutase of Lachnoclostridium phytofermentans (strain ATCC 700394 / DSM 18823 / ISDg) (Clostridium phytofermentans).